The following is a 170-amino-acid chain: Sec-independent protein translocase protein TatB (170 aa).

The helical transmembrane segment at 1–21 (MIDFGFDKIALIGAVALIVIG) threads the bilayer. A disordered region spans residues 69-170 (AARNVEQSVS…VARFRPPRPL (102 aa)). Residues 73 to 93 (VEQSVSSEVNRTSSEMNQAWE) show a composition bias toward polar residues. Over residues 128–137 (HPRKNWRLKR) the composition is skewed to basic residues.

This sequence belongs to the TatB family. As to quaternary structure, the Tat system comprises two distinct complexes: a TatABC complex, containing multiple copies of TatA, TatB and TatC subunits, and a separate TatA complex, containing only TatA subunits. Substrates initially bind to the TatABC complex, which probably triggers association of the separate TatA complex to form the active translocon.

Its subcellular location is the cell inner membrane. Part of the twin-arginine translocation (Tat) system that transports large folded proteins containing a characteristic twin-arginine motif in their signal peptide across membranes. Together with TatC, TatB is part of a receptor directly interacting with Tat signal peptides. TatB may form an oligomeric binding site that transiently accommodates folded Tat precursor proteins before their translocation. The chain is Sec-independent protein translocase protein TatB from Methylibium petroleiphilum (strain ATCC BAA-1232 / LMG 22953 / PM1).